The chain runs to 540 residues: Collagen alpha-1(XXIII) chain (540 aa).

The span at 1–26 shows a compositional bias: gly residues; that stretch reads MGPGERAGGGGDAGKGNAAGGGGGGR. A disordered region spans residues 1 to 28; it reads MGPGERAGGGGDAGKGNAAGGGGGGRSA. At 1–34 the chain is on the cytoplasmic side; sequence MGPGERAGGGGDAGKGNAAGGGGGGRSATTAGSR. Residues 35-56 form a helical; Signal-anchor for type II membrane protein membrane-spanning segment; that stretch reads AVSALCLLLSVGSAAACLLLGV. Residues 57–540 lie on the Extracellular side of the membrane; that stretch reads QAAALQGRVA…GLPVPGCWHK (484 aa). Disordered regions lie at residues 109-304 and 316-540; these read AREA…GEQG and LDAL…CWHK. 5 consecutive Collagen-like domains span residues 124–243, 251–305, 321–380, 412–460, and 463–522; these read GRRG…PGKK, QPGP…EQGD, GPPG…MGLS, GPPG…GPPG, and GLPG…PGLD. Low complexity-rich tracts occupy residues 140–156 and 168–183; these read QSGR…DGKP and PGDF…DGAA. Over residues 185–195 the composition is skewed to pro residues; the sequence is PPGPPGPPGAR. A compositionally biased stretch (pro residues) spans 322 to 334; it reads PPGPQGPPGPPGI. The span at 350 to 362 shows a compositional bias: basic and acidic residues; the sequence is DGEKGPKGQKGDP. Residues 411-422 are compositionally biased toward pro residues; it reads PGPPGPPGPPGP. Composition is skewed to basic and acidic residues over residues 435–444 and 486–503; these read DGAKGEKGAS and RGEK…ERGV.

As to quaternary structure, homotrimer. Post-translationally, undergoes proteolytic cleavage by furin protease to yield a 60 kDa soluble form that forms a homotrimer and exhibits a low affinity interaction with heparin.

The protein localises to the cell membrane. In Homo sapiens (Human), this protein is Collagen alpha-1(XXIII) chain (COL23A1).